Here is a 182-residue protein sequence, read N- to C-terminus: Peptidoglycan recognition protein (182 aa).

An N-terminal signal peptide occupies residues 1–16 (MEILFVLFFVFVTVSG). Intrachain disulfides connect C18/C140 and C54/C60. Residues 39-166 (RPVELVIIQH…RQLISTESPG (128 aa)) enclose the N-acetylmuramoyl-L-alanine amidase domain.

This sequence belongs to the N-acetylmuramoyl-L-alanine amidase 2 family. As to quaternary structure, monomer. Strongly expressed in fat body with weak expression observed in hemocyte. No expression detected in gut.

In terms of biological role, binds specifically to peptidoglycan and triggers the propenoloxidase cascade which is an important insect innate immune defense mechanism. The sequence is that of Peptidoglycan recognition protein (PGRP) from Trichoplusia ni (Cabbage looper).